The chain runs to 251 residues: CCN family member 5 (251 aa).

Residues 1-23 (MRGNPLIHLLAISFLCILSMVYS) form the signal peptide. Positions 24–103 (QLCPAPCACP…EEDDGSCEVN (80 aa)) constitute an IGFBP N-terminal domain. Cystine bridges form between C26/C50, C30/C52, C32/C53, C39/C56, C64/C78, and C70/C100. In terms of domain architecture, VWFC spans 98–164 (GSCEVNGRRY…GRCCPEWVCD (67 aa)). The region spanning 195–239 (CPNWSTAWGPCSTTCGLGIATRVSNQNRFCQLEIQRRLCLSRPCL) is the TSP type-1 domain. N197 carries N-linked (GlcNAc...) asparagine glycosylation.

Belongs to the CCN family.

It localises to the secreted. In terms of biological role, may play an important role in modulating bone turnover. Promotes the adhesion of osteoblast cells and inhibits the binding of fibrinogen to integrin receptors. In addition, inhibits osteocalcin production. The sequence is that of CCN family member 5 (Ccn5) from Mus musculus (Mouse).